Here is a 372-residue protein sequence, read N- to C-terminus: N-acetylneuraminate epimerase 1 (372 aa).

The first 25 residues, 1–25, serve as a signal peptide directing secretion; the sequence is MITMKVKNFIYLPFCLFIGTSVAGA. 7 Kelch repeats span residues 44 to 88, 90 to 141, 143 to 177, 178 to 223, 226 to 269, 291 to 340, and 342 to 371; these read KIYI…TIID, KIYV…FIHN, HAVSTGGVNENIFNGYFSDVELSKGNSALTEKVNR, DYFS…IFAE, IYIL…VSGA, EKYS…PWQG, and MLILGGEKKDGKAVSDVIYLKKNDKQIKIV. Residue E232 is the Proton acceptor of the active site.

Belongs to the NanM family. In terms of assembly, homodimer.

Its subcellular location is the periplasm. The catalysed reaction is N-acetyl-alpha-neuraminate = N-acetyl-beta-neuraminate. Functionally, converts alpha-N-acetylneuranimic acid (Neu5Ac) to the beta-anomer, accelerating the equilibrium between the alpha- and beta-anomers. Probably facilitates sialidase-negative bacteria to compete successfully for limited amounts of extracellular Neu5Ac, which is likely taken up in the beta-anomer. In addition, the rapid removal of sialic acid from solution might be advantageous to the bacterium to damp down host responses. This is N-acetylneuraminate epimerase 1 from Escherichia coli O6:H1 (strain CFT073 / ATCC 700928 / UPEC).